We begin with the raw amino-acid sequence, 94 residues long: Large ribosomal subunit protein bL27 (94 aa).

The propeptide occupies Met-1–Phe-9. Residues His-11–Ala-34 are disordered.

Belongs to the bacterial ribosomal protein bL27 family. In terms of processing, the N-terminus is cleaved by ribosomal processing cysteine protease Prp.

This chain is Large ribosomal subunit protein bL27, found in Streptococcus pyogenes serotype M3 (strain ATCC BAA-595 / MGAS315).